A 447-amino-acid chain; its full sequence is Phosphoglucosamine mutase (447 aa).

Catalysis depends on S103, which acts as the Phosphoserine intermediate. The Mg(2+) site is built by S103, D242, D244, and D246. Phosphoserine is present on S103.

This sequence belongs to the phosphohexose mutase family. Mg(2+) is required as a cofactor. Activated by phosphorylation.

It carries out the reaction alpha-D-glucosamine 1-phosphate = D-glucosamine 6-phosphate. In terms of biological role, catalyzes the conversion of glucosamine-6-phosphate to glucosamine-1-phosphate. This is Phosphoglucosamine mutase from Marinobacter nauticus (strain ATCC 700491 / DSM 11845 / VT8) (Marinobacter aquaeolei).